Reading from the N-terminus, the 1487-residue chain is Protein clueless (1487 aa).

Disordered stretches follow at residues 1–94 (MALE…NGDA) and 110–140 (GATA…EAAA). Basic residues predominate over residues 56–65 (TKKKGKKNRN). Positions 111–126 (ATAAAGATEAAAEVGS) are enriched in low complexity. Ser284 bears the Phosphoserine mark. The region spanning 438–680 (RAEDAFSSKL…RTFPPDVNFL (243 aa)) is the Clu domain. Positions 739 to 785 (QAEKELPSITEKQEEPEKEQAEKSSAEQPEKEKEKEKDKEDEQKESK) are enriched in basic and acidic residues. Disordered stretches follow at residues 739 to 794 (QAEK…TKSA) and 980 to 1040 (VSSE…TAST). Residues 988-1005 (KQSRNNGGKHNKHNKSNK) are compositionally biased toward basic residues. Polar residues predominate over residues 1009–1019 (PQSTSAAAATQ). Over residues 1020–1040 (NGHSSTAANGSANSAANTAST) the composition is skewed to low complexity. TPR repeat units lie at residues 1140 to 1173 (AYNF…LNNV), 1266 to 1299 (ALID…NLKY), and 1301 to 1334 (GNKA…EKET). Positions 1456–1487 (DTEQPKEGSEVEGATATQLTNGSEDSTTTVSS) are disordered. Positions 1470–1487 (TATQLTNGSEDSTTTVSS) are enriched in polar residues.

This sequence belongs to the CLU family.

It localises to the cytoplasm. In terms of biological role, mRNA-binding protein involved in proper cytoplasmic distribution of mitochondria. The chain is Protein clueless from Drosophila mojavensis (Fruit fly).